Here is a 78-residue protein sequence, read N- to C-terminus: U7-lycotoxin-Ls1e (78 aa).

A signal peptide spans 1–22 (MKLIIFTGLALLLIVSLIDVEA). Positions 23–26 (QNEG) are excised as a propeptide.

Belongs to the neurotoxin 19 (CSTX) family. 07 (U7-Lctx) subfamily. In terms of processing, contains 4 disulfide bonds. As to expression, expressed by the venom gland.

The protein localises to the secreted. This chain is U7-lycotoxin-Ls1e, found in Lycosa singoriensis (Wolf spider).